A 199-amino-acid chain; its full sequence is 7-methyl-GTP pyrophosphatase (199 aa).

Aspartate 74 serves as the catalytic Proton acceptor.

Belongs to the Maf family. YceF subfamily. It depends on a divalent metal cation as a cofactor.

The protein resides in the cytoplasm. It carries out the reaction N(7)-methyl-GTP + H2O = N(7)-methyl-GMP + diphosphate + H(+). Nucleoside triphosphate pyrophosphatase that hydrolyzes 7-methyl-GTP (m(7)GTP). May have a dual role in cell division arrest and in preventing the incorporation of modified nucleotides into cellular nucleic acids. This chain is 7-methyl-GTP pyrophosphatase, found in Cupriavidus pinatubonensis (strain JMP 134 / LMG 1197) (Cupriavidus necator (strain JMP 134)).